Reading from the N-terminus, the 130-residue chain is Granulin (130 aa).

The N-terminal stretch at 1–26 is a signal peptide; it reads MNYSKIFIFGIISLILMALFSSTVES. Cystine bridges form between C67–C79 and C73–C89.

The protein belongs to the granulin family. Granulins are disulfide bridged.

It is found in the secreted. The polypeptide is Granulin (grn) (Dictyostelium discoideum (Social amoeba)).